The sequence spans 453 residues: UDP-glycosyltransferase 74E1 (453 aa).

UDP-alpha-D-glucose is bound by residues S279, 332-334 (SPQ), 349-357 (HCGWNSTLE), and 371-374 (WADQ).

It belongs to the UDP-glycosyltransferase family.

The polypeptide is UDP-glycosyltransferase 74E1 (UGT74E1) (Arabidopsis thaliana (Mouse-ear cress)).